The primary structure comprises 322 residues: Lymphatic vessel endothelial hyaluronic acid receptor 1 (322 aa).

The signal sequence occupies residues 1 to 19 (MARCFSLVLLLTSIWTTRL). The Extracellular segment spans residues 20-238 (LVQGSLRAEE…EAAGFGGVPT (219 aa)). The 91-residue stretch at 40-130 (GITLVSKKAN…SRQFAAYCYN (91 aa)) folds into the Link domain. N-linked (GlcNAc...) asparagine glycosylation is present at Asn-53. Cystine bridges form between Cys-61-Cys-128 and Cys-85-Cys-106. Residue Asn-130 is glycosylated (N-linked (GlcNAc...) asparagine). Residues 239-259 (ALLVLALLFFGAAAGLGFCYV) form a helical membrane-spanning segment. Over 260 to 322 (KRYVKAFPFT…TTVRCLEAEV (63 aa)) the chain is Cytoplasmic. Over residues 279 to 309 (ETKVVKEEKANDSNPNEESKKTDKNPEESKS) the composition is skewed to basic and acidic residues. The interval 279-322 (ETKVVKEEKANDSNPNEESKKTDKNPEESKSPSKTTVRCLEAEV) is disordered.

As to quaternary structure, homodimer; disulfide-linked. Interacts with PDGFB and IGFBP3. Forms a transient ternary complex with PDGFB and PDGFRB in TGN. Post-translationally, O-glycosylated. As to expression, mainly expressed in endothelial cells lining lymphatic vessels.

The protein localises to the cell membrane. Its function is as follows. Ligand-specific transporter trafficking between intracellular organelles (TGN) and the plasma membrane. Plays a role in autocrine regulation of cell growth mediated by growth regulators containing cell surface retention sequence binding (CRS). May act as a hyaluronan (HA) transporter, either mediating its uptake for catabolism within lymphatic endothelial cells themselves, or its transport into the lumen of afferent lymphatic vessels for subsequent re-uptake and degradation in lymph nodes. Binds to pericelluar hyaluronan matrices deposited on the surface of leukocytes and facilitates cell adhesion and migration through lymphatic endothelium. This is Lymphatic vessel endothelial hyaluronic acid receptor 1 (LYVE1) from Homo sapiens (Human).